The following is a 359-amino-acid chain: Protein PAM71-homolog, chloroplastic (359 aa).

The N-terminal 66 residues, 1–66 (MKLTSLSKNA…DLLWGKFRVR (66 aa)), are a transit peptide targeting the chloroplast. The disordered stretch occupies residues 71–102 (GVGSGSYSGGEEDGSQSSSLDQSPATSSESLK). Positions 85–98 (SQSSSLDQSPATSS) are enriched in low complexity. 7 consecutive transmembrane segments (helical) span residues 110 to 130 (SLSIALVLLSCGLVFSLITFV), 149 to 169 (AFSLIFVSEIGDKTFFIAALL), 177 to 197 (LVLLGSMGALSLMTILSVVIG), 207 to 227 (FQTTLPIGEYAAIALLMFFGL), 269 to 289 (LTNPLEILWKSFSLVFFAEWG), 311 to 331 (GAIAGHLVATVLAIMGGAFLA), and 339 to 359 (VGYVGGALFLVFAAATFFGVF).

Belongs to the GDT1 family.

The protein localises to the plastid. It is found in the chloroplast membrane. Probable chloroplast-localized Mn(2+)/H(+) and/or Ca(2+)/H(+) antiporter regulating Ca(2+), Mn(2+) and pH homeostasis. The chain is Protein PAM71-homolog, chloroplastic from Arabidopsis thaliana (Mouse-ear cress).